A 108-amino-acid polypeptide reads, in one-letter code: Iron-sulfur cluster assembly protein CyaY (108 aa).

Belongs to the frataxin family.

Its function is as follows. Involved in iron-sulfur (Fe-S) cluster assembly. May act as a regulator of Fe-S biogenesis. This chain is Iron-sulfur cluster assembly protein CyaY, found in Pseudoalteromonas atlantica (strain T6c / ATCC BAA-1087).